Reading from the N-terminus, the 506-residue chain is Histidine ammonia-lyase (506 aa).

Positions 143–145 (ASG) form a cross-link, 5-imidazolinone (Ala-Gly). 2,3-didehydroalanine (Ser) is present on Ser-144.

It belongs to the PAL/histidase family. Contains an active site 4-methylidene-imidazol-5-one (MIO), which is formed autocatalytically by cyclization and dehydration of residues Ala-Ser-Gly.

The protein resides in the cytoplasm. It carries out the reaction L-histidine = trans-urocanate + NH4(+). It functions in the pathway amino-acid degradation; L-histidine degradation into L-glutamate; N-formimidoyl-L-glutamate from L-histidine: step 1/3. The sequence is that of Histidine ammonia-lyase from Salmonella gallinarum (strain 287/91 / NCTC 13346).